The sequence spans 249 residues: Expansin-A18 (249 aa).

The N-terminal stretch at 1–21 is a signal peptide; that stretch reads MGNIVLQLLAILALCIAPARS. Positions 41–154 constitute an Expansin-like EG45 domain; it reads GGACGYGNLY…QQVKCWRSGG (114 aa). Asn116 carries N-linked (GlcNAc...) asparagine glycosylation. The Expansin-like CBD domain maps to 164 to 243; the sequence is YFELVLVTNM…GWSFGQTFST (80 aa).

This sequence belongs to the expansin family. Expansin A subfamily. Expressed in roots.

It localises to the secreted. The protein resides in the cell wall. Its subcellular location is the membrane. Its function is as follows. May cause loosening and extension of plant cell walls by disrupting non-covalent bonding between cellulose microfibrils and matrix glucans. No enzymatic activity has been found. May be required for rapid internodal elongation in deepwater rice during submergence. This chain is Expansin-A18 (EXPA18), found in Oryza sativa subsp. japonica (Rice).